Here is a 311-residue protein sequence, read N- to C-terminus: Ribosomal RNA small subunit methyltransferase H (311 aa).

Residues Gly39–His41, Asp59, Phe81, Asp102, and His109 each bind S-adenosyl-L-methionine.

It belongs to the methyltransferase superfamily. RsmH family.

The protein resides in the cytoplasm. It carries out the reaction cytidine(1402) in 16S rRNA + S-adenosyl-L-methionine = N(4)-methylcytidine(1402) in 16S rRNA + S-adenosyl-L-homocysteine + H(+). In terms of biological role, specifically methylates the N4 position of cytidine in position 1402 (C1402) of 16S rRNA. This is Ribosomal RNA small subunit methyltransferase H from Porphyromonas gingivalis (strain ATCC BAA-308 / W83).